The sequence spans 342 residues: Phosphoribosylformylglycinamidine cyclo-ligase (342 aa).

Belongs to the AIR synthase family.

Its subcellular location is the cytoplasm. It catalyses the reaction 2-formamido-N(1)-(5-O-phospho-beta-D-ribosyl)acetamidine + ATP = 5-amino-1-(5-phospho-beta-D-ribosyl)imidazole + ADP + phosphate + H(+). Its pathway is purine metabolism; IMP biosynthesis via de novo pathway; 5-amino-1-(5-phospho-D-ribosyl)imidazole from N(2)-formyl-N(1)-(5-phospho-D-ribosyl)glycinamide: step 2/2. The sequence is that of Phosphoribosylformylglycinamidine cyclo-ligase from Staphylococcus aureus (strain USA300).